Here is a 300-residue protein sequence, read N- to C-terminus: Lysenin-related protein 2 (300 aa).

The interval glutamate 12–serine 35 is N-terminal cap domain. The beta-hairpin domain stretch occupies residues valine 36–isoleucine 109. The tract at residues proline 110 to leucine 158 is N-terminal cap domain. Residues valine 159–lysine 299 are C-terminal receptor-binding domain. An N-(acyl)-sphingosylphosphocholine is bound by residues lysine 187, serine 229, tyrosine 235, and tyrosine 284. A disulfide bridge links cysteine 274 with cysteine 285.

This sequence belongs to the lysenin family. Binds to sphingomyelin as a monomer by using its C-terminal domain. Forms a nonamer when sphingomyelin/LRP-2 ratio is lower than ca 500. Oligomerization, but not binding, is influenced by the fluidity of sphingomyelin. In terms of tissue distribution, expressed by coelomocytes.

Its subcellular location is the secreted. The protein localises to the target cell membrane. Pore-forming toxin that specifically binds sphingomyelin in the plasma membrane of various cells. Has hemolytic activity. It also has antibacterial activities against B.megaterium. This is Lysenin-related protein 2 from Eisenia fetida (Red wiggler worm).